The sequence spans 383 residues: UDP-N-acetylglucosamine--N-acetylmuramyl-(pentapeptide) pyrophosphoryl-undecaprenol N-acetylglucosamine transferase (383 aa).

Residues 11 to 13, Asn125, Arg166, Ser191, Ile246, and Gln291 contribute to the UDP-N-acetyl-alpha-D-glucosamine site; that span reads TGG. The interval 364-383 is disordered; it reads PNGRERTPIEAEKKAPRSNS. The span at 366 to 383 shows a compositional bias: basic and acidic residues; the sequence is GRERTPIEAEKKAPRSNS.

The protein belongs to the glycosyltransferase 28 family. MurG subfamily.

It is found in the cell inner membrane. It carries out the reaction di-trans,octa-cis-undecaprenyl diphospho-N-acetyl-alpha-D-muramoyl-L-alanyl-D-glutamyl-meso-2,6-diaminopimeloyl-D-alanyl-D-alanine + UDP-N-acetyl-alpha-D-glucosamine = di-trans,octa-cis-undecaprenyl diphospho-[N-acetyl-alpha-D-glucosaminyl-(1-&gt;4)]-N-acetyl-alpha-D-muramoyl-L-alanyl-D-glutamyl-meso-2,6-diaminopimeloyl-D-alanyl-D-alanine + UDP + H(+). It functions in the pathway cell wall biogenesis; peptidoglycan biosynthesis. In terms of biological role, cell wall formation. Catalyzes the transfer of a GlcNAc subunit on undecaprenyl-pyrophosphoryl-MurNAc-pentapeptide (lipid intermediate I) to form undecaprenyl-pyrophosphoryl-MurNAc-(pentapeptide)GlcNAc (lipid intermediate II). The polypeptide is UDP-N-acetylglucosamine--N-acetylmuramyl-(pentapeptide) pyrophosphoryl-undecaprenol N-acetylglucosamine transferase (Myxococcus xanthus (strain DK1622)).